Here is a 593-residue protein sequence, read N- to C-terminus: tRNA (guanine(26)-N(2))-dimethyltransferase 1 (593 aa).

One can recognise a Trm1 methyltransferase domain in the interval Thr9 to Met465. Arg36 contributes to the S-adenosyl-L-methionine binding site. The interval Ala56–Glu118 is disordered. Basic and acidic residues-rich tracts occupy residues Val68–Thr81 and Asp88–Glu118. S-adenosyl-L-methionine is bound by residues Arg134, Asp152, and Val185. Positions 315, 318, 350, and 353 each coordinate Zn(2+). The tract at residues Val546–Ser593 is disordered. Residues Gly558–Glu577 are compositionally biased toward acidic residues. Over residues Pro578–Glu587 the composition is skewed to basic and acidic residues.

Belongs to the class I-like SAM-binding methyltransferase superfamily. Trm1 family.

The enzyme catalyses guanosine(26) in tRNA + 2 S-adenosyl-L-methionine = N(2)-dimethylguanosine(26) in tRNA + 2 S-adenosyl-L-homocysteine + 2 H(+). In terms of biological role, dimethylates a single guanine residue at position 26 of most tRNAs using S-adenosyl-L-methionine as donor of the methyl groups. This chain is tRNA (guanine(26)-N(2))-dimethyltransferase 1, found in Arabidopsis thaliana (Mouse-ear cress).